The following is a 309-amino-acid chain: 2-dehydro-3-deoxygluconokinase (309 aa).

Residues 34-38, Tyr89, 103-105, and Arg167 contribute to the substrate site; these read GAEVN and YYR. ATP is bound by residues 165-167, Ser193, 219-225, 248-251, and Asn275; these read NYR, KRGAKGA, and GAGD. Residue Asp251 coordinates substrate. Asp251 (proton acceptor) is an active-site residue. Residue Asp287 coordinates substrate.

Belongs to the carbohydrate kinase pfkB family. In terms of assembly, homohexamer; trimer of dimers.

The catalysed reaction is 2-dehydro-3-deoxy-D-gluconate + ATP = 2-dehydro-3-deoxy-6-phospho-D-gluconate + ADP + H(+). The protein operates within carbohydrate acid metabolism; 2-dehydro-3-deoxy-D-gluconate degradation; D-glyceraldehyde 3-phosphate and pyruvate from 2-dehydro-3-deoxy-D-gluconate: step 1/2. In terms of biological role, involved in the degradation of glucose via the semi-phosphorylative Entner-Doudoroff pathway. Catalyzes the phosphorylation of 2-keto-3-deoxygluconate (KDG) to produce 2-keto-3-deoxy-6-phosphogluconate (KDPG). The polypeptide is 2-dehydro-3-deoxygluconokinase (kdgK) (Thermus thermophilus (strain ATCC 27634 / DSM 579 / HB8)).